Here is a 557-residue protein sequence, read N- to C-terminus: Leucine-rich glioma-inactivated protein 1 (557 aa).

The signal sequence occupies residues 1–34 (MESERSKRMGNACIPLKRIAYFLCLLSALLLTEG). Positions 35–72 (KKPAKPKCPAVCTCTKDNALCENARSIPRTVPPDVISL) constitute an LRRNT domain. 3 LRR repeats span residues 92-113 (SLQLLLFTSNSFDVISDDAFIG), 116-137 (HLEYLFIENNNIKSISRHTFRG), and 140-161 (SLIHLSLANNNLQTLPKDIFKG). Residues 173–223 (NSFNCDCKLKWLVEWLGHTNATVEDIYCEGPPEYKKRKINSLSSKDFDCII) enclose the LRRCT domain. Asn-192 carries N-linked (GlcNAc...) asparagine glycosylation. EAR repeat units follow at residues 225 to 267 (EFAK…EWDH), 271 to 313 (TFRN…KRDS), 317 to 364 (KFIK…KWNG), 366 to 415 (GFYS…QWNK), 419 to 462 (LFTN…KWGG), 464 to 506 (SFQD…NWDA), and 510 to 552 (KFVK…KHVI). The N-linked (GlcNAc...) asparagine glycan is linked to Asn-277. Asn-422 is a glycosylation site (N-linked (GlcNAc...) asparagine).

As to quaternary structure, oligomer. Interacts with KCNA1 within a complex containing KCNA1, KCNA4 and KCNAB1. Part of a complex containing ADAM22, DLG4/PSD95 and CACNG2/Stargazin. Can bind to ADAM11 and ADAM23. Post-translationally, glycosylated. As to expression, predominantly expressed in neural tissues, especially in brain. Expression is reduced in low-grade brain tumors and significantly reduced or absent in malignant gliomas. Expressed in the occipital cortex and hippocampus; higher amounts are observed in the parietal and frontal cortices, putamen, and, particularly, in the temporal neocortex, where it is between 3 and 5 times more abundant than in the hippocampus (at protein level). Expression is absent in the cerebellum. In terms of tissue distribution, abundantly expressed in the occipital cortex and weakly expressed in the hippocampus (at protein level).

It localises to the secreted. The protein localises to the synapse. Its subcellular location is the cytoplasm. It is found in the golgi apparatus. The protein resides in the endoplasmic reticulum. Regulates voltage-gated potassium channels assembled from KCNA1, KCNA4 and KCNAB1. It slows down channel inactivation by precluding channel closure mediated by the KCNAB1 subunit. Ligand for ADAM22 that positively regulates synaptic transmission mediated by AMPA-type glutamate receptors. Plays a role in suppressing the production of MMP1/3 through the phosphatidylinositol 3-kinase/ERK pathway. May play a role in the control of neuroblastoma cell survival. This is Leucine-rich glioma-inactivated protein 1 (LGI1) from Homo sapiens (Human).